A 316-amino-acid polypeptide reads, in one-letter code: Ribose-phosphate pyrophosphokinase (316 aa).

ATP is bound by residues 39–41 (DGE) and 98–99 (RQ). His133 and Asp172 together coordinate Mg(2+). Residue Lys195 is part of the active site. Residues Arg197, Asp221, and 225 to 229 (DTANT) each bind D-ribose 5-phosphate.

Belongs to the ribose-phosphate pyrophosphokinase family. Class I subfamily. In terms of assembly, homohexamer. Mg(2+) serves as cofactor.

The protein localises to the cytoplasm. It catalyses the reaction D-ribose 5-phosphate + ATP = 5-phospho-alpha-D-ribose 1-diphosphate + AMP + H(+). It functions in the pathway metabolic intermediate biosynthesis; 5-phospho-alpha-D-ribose 1-diphosphate biosynthesis; 5-phospho-alpha-D-ribose 1-diphosphate from D-ribose 5-phosphate (route I): step 1/1. Functionally, involved in the biosynthesis of the central metabolite phospho-alpha-D-ribosyl-1-pyrophosphate (PRPP) via the transfer of pyrophosphoryl group from ATP to 1-hydroxyl of ribose-5-phosphate (Rib-5-P). The chain is Ribose-phosphate pyrophosphokinase from Nitrosomonas europaea (strain ATCC 19718 / CIP 103999 / KCTC 2705 / NBRC 14298).